We begin with the raw amino-acid sequence, 497 residues long: Aspartyl/glutamyl-tRNA(Asn/Gln) amidotransferase subunit B (497 aa).

Belongs to the GatB/GatE family. GatB subfamily. Heterotrimer of A, B and C subunits.

The enzyme catalyses L-glutamyl-tRNA(Gln) + L-glutamine + ATP + H2O = L-glutaminyl-tRNA(Gln) + L-glutamate + ADP + phosphate + H(+). The catalysed reaction is L-aspartyl-tRNA(Asn) + L-glutamine + ATP + H2O = L-asparaginyl-tRNA(Asn) + L-glutamate + ADP + phosphate + 2 H(+). Functionally, allows the formation of correctly charged Asn-tRNA(Asn) or Gln-tRNA(Gln) through the transamidation of misacylated Asp-tRNA(Asn) or Glu-tRNA(Gln) in organisms which lack either or both of asparaginyl-tRNA or glutaminyl-tRNA synthetases. The reaction takes place in the presence of glutamine and ATP through an activated phospho-Asp-tRNA(Asn) or phospho-Glu-tRNA(Gln). This Rhodopirellula baltica (strain DSM 10527 / NCIMB 13988 / SH1) protein is Aspartyl/glutamyl-tRNA(Asn/Gln) amidotransferase subunit B.